A 218-amino-acid polypeptide reads, in one-letter code: 25 kDa calcium-binding protein (218 aa).

EF-hand domains lie at 24 to 59 (GAKTVARRIFENYDKGRKGRIENTDCVPMITEAYKS), 66 to 101 (PSSDDIKAYHRVLDRNGDGIVTYQDIEELCIRYLTG), 128 to 163 (AKLDVARRLFKRYDKDGSGQLQDDEIAGLLKDTYAE), and 171 to 206 (PTKEDVKIWLQMADTNSDGSVSLEEYEDLIIKSLQK). Residues aspartate 37, arginine 43, aspartate 48, aspartate 79, asparagine 81, aspartate 83, aspartate 90, aspartate 141, aspartate 143, serine 145, glutamine 147, glutamate 152, aspartate 184, asparagine 186, aspartate 188, serine 190, and glutamate 195 each contribute to the Ca(2+) site.

Expected to play a crucial role in calcium-dependent regulation of ciliary movement. The polypeptide is 25 kDa calcium-binding protein (Tetrahymena thermophila).